The primary structure comprises 157 residues: Globin (157 aa).

At Gly-1 the chain carries N-acetylglycine. Residues 8-155 (SLSADQKAAI…MANIIDAEQK (148 aa)) form the Globin domain. His-70 and His-102 together coordinate heme b.

It belongs to the globin family. Monomer.

This is Globin from Nerita albicilla (Ox-palate nerite).